The sequence spans 197 residues: RING-H2 finger protein ATL80 (197 aa).

Residues 30-50 form a helical membrane-spanning segment; sequence LVVILAALLCALICVLGLIAV. The segment at 111-153 adopts an RING-type; atypical zinc-finger fold; the sequence is CAICLAEFSAGDELRVLPQCGHGFHVACIDTWLGSHSSCPSCR. Residues 168–197 form a disordered region; sequence PGSSSSGLESEPEIEIRIKQGEDDPNSFLP.

It belongs to the RING-type zinc finger family. ATL subfamily.

Its subcellular location is the membrane. It carries out the reaction S-ubiquitinyl-[E2 ubiquitin-conjugating enzyme]-L-cysteine + [acceptor protein]-L-lysine = [E2 ubiquitin-conjugating enzyme]-L-cysteine + N(6)-ubiquitinyl-[acceptor protein]-L-lysine.. The protein operates within protein modification; protein ubiquitination. In terms of biological role, may be involved in the early steps of the plant defense signaling pathway. This chain is RING-H2 finger protein ATL80 (ATL80), found in Arabidopsis thaliana (Mouse-ear cress).